A 343-amino-acid polypeptide reads, in one-letter code: Putative kinase HI_0665 (343 aa).

The active-site Proton acceptor is the Asp-209.

It belongs to the HipA Ser/Thr kinase family.

This chain is Putative kinase HI_0665, found in Haemophilus influenzae (strain ATCC 51907 / DSM 11121 / KW20 / Rd).